Consider the following 424-residue polypeptide: Phosphoribosylamine--glycine ligase (424 aa).

In terms of domain architecture, ATP-grasp spans 107–313 (KTFMKKYGIP…FLETLLNFYE (207 aa)). Residue 133 to 194 (VEKVGAPIVV…EEFLEGEEAS (62 aa)) coordinates ATP. Mg(2+) is bound by residues glutamate 283 and asparagine 285.

Belongs to the GARS family. Mg(2+) serves as cofactor. Mn(2+) is required as a cofactor.

The catalysed reaction is 5-phospho-beta-D-ribosylamine + glycine + ATP = N(1)-(5-phospho-beta-D-ribosyl)glycinamide + ADP + phosphate + H(+). Its pathway is purine metabolism; IMP biosynthesis via de novo pathway; N(1)-(5-phospho-D-ribosyl)glycinamide from 5-phospho-alpha-D-ribose 1-diphosphate: step 2/2. This Aquifex aeolicus (strain VF5) protein is Phosphoribosylamine--glycine ligase.